A 206-amino-acid chain; its full sequence is Macrophage immunometabolism regulator (206 aa).

M1 is modified (N-acetylmethionine). The disordered stretch occupies residues 1–41 (MEVDINGESRSTLTTLPFPGAEANSPGKAEAEKPRCSSTPC). Phosphoserine occurs at positions 25, 140, and 167.

The protein belongs to the UNC119-binding protein family. As to quaternary structure, interacts with UNC119 and UNC119B; interaction preferentially takes place when UNC119 and UNC119B are unliganded with myristoylated proteins. In terms of processing, phosphorylated. High expression in normal macrophages, monocytes, and cultured rheumatoid arthritis synovial fibroblasts (RASFs), with lower expression in B- and T-cells, and little to no expression in other tissues and cell lines.

It is found in the cytoplasm. The protein resides in the cell projection. The protein localises to the cilium. In terms of biological role, regulates the macrophage function, by enhancing the resolution of inflammation and wound repair functions mediated by M2 macrophages. The regulation of macrophage function is, due at least in part, to its ability to inhibit glycolysis. May also play a role in trafficking of proteins via its interaction with UNC119 and UNC119B cargo adapters: may help the release of UNC119 and UNC119B cargo or the recycling of UNC119 and UNC119B. May play a role in ciliary membrane localization via its interaction with UNC119B and protein transport into photoreceptor cells. This is Macrophage immunometabolism regulator from Homo sapiens (Human).